Here is a 378-residue protein sequence, read N- to C-terminus: GTP 3',8-cyclase 3 (378 aa).

In terms of domain architecture, Radical SAM core spans 40 to 259 (RCGRTMGDLR…STLGKKYGPI (220 aa)). Arg49 lines the GTP pocket. Residues Cys56 and Cys60 each coordinate [4Fe-4S] cluster. Residue Tyr62 coordinates S-adenosyl-L-methionine. Cys63 lines the [4Fe-4S] cluster pocket. GTP is bound at residue Arg99. Gly103 lines the S-adenosyl-L-methionine pocket. Thr134 contacts GTP. Position 158 (Ser158) interacts with S-adenosyl-L-methionine. Lys195 contacts GTP. An S-adenosyl-L-methionine-binding site is contributed by Met229. [4Fe-4S] cluster-binding residues include Cys292 and Cys295. GTP is bound at residue 297–299 (RSR). A [4Fe-4S] cluster-binding site is contributed by Cys309.

The protein belongs to the radical SAM superfamily. MoaA family. Monomer and homodimer. [4Fe-4S] cluster is required as a cofactor.

It catalyses the reaction GTP + AH2 + S-adenosyl-L-methionine = (8S)-3',8-cyclo-7,8-dihydroguanosine 5'-triphosphate + 5'-deoxyadenosine + L-methionine + A + H(+). The protein operates within cofactor biosynthesis; molybdopterin biosynthesis. Its function is as follows. Catalyzes the cyclization of GTP to (8S)-3',8-cyclo-7,8-dihydroguanosine 5'-triphosphate. The polypeptide is GTP 3',8-cyclase 3 (Mycobacterium bovis (strain ATCC BAA-935 / AF2122/97)).